The primary structure comprises 308 residues: Methionyl-tRNA formyltransferase (308 aa).

109–112 (SLLP) contacts (6S)-5,6,7,8-tetrahydrofolate.

Belongs to the Fmt family.

It carries out the reaction L-methionyl-tRNA(fMet) + (6R)-10-formyltetrahydrofolate = N-formyl-L-methionyl-tRNA(fMet) + (6S)-5,6,7,8-tetrahydrofolate + H(+). Its function is as follows. Attaches a formyl group to the free amino group of methionyl-tRNA(fMet). The formyl group appears to play a dual role in the initiator identity of N-formylmethionyl-tRNA by promoting its recognition by IF2 and preventing the misappropriation of this tRNA by the elongation apparatus. This is Methionyl-tRNA formyltransferase from Methylobacillus flagellatus (strain ATCC 51484 / DSM 6875 / VKM B-1610 / KT).